The primary structure comprises 249 residues: Small ribosomal subunit protein uS3y (249 aa).

In terms of domain architecture, KH type-2 spans 21-92 (LNEVLTRELA…SVELYAEKVN (72 aa)). Residue Ser212 is modified to Phosphoserine.

This sequence belongs to the universal ribosomal protein uS3 family.

The protein is Small ribosomal subunit protein uS3y (RPS3B) of Arabidopsis thaliana (Mouse-ear cress).